The primary structure comprises 73 residues: UPF0154 protein LGAS_0795 (73 aa).

Residues 3 to 23 (LGLAIFLIIIALLIGLVGGFY) traverse the membrane as a helical segment.

It belongs to the UPF0154 family.

It is found in the cell membrane. The polypeptide is UPF0154 protein LGAS_0795 (Lactobacillus gasseri (strain ATCC 33323 / DSM 20243 / BCRC 14619 / CIP 102991 / JCM 1131 / KCTC 3163 / NCIMB 11718 / NCTC 13722 / AM63)).